The sequence spans 258 residues: MAKRIETKDLDIYYGSFHAVESVNLIVEPRTVTAFIGPSGCGKSTVLRTLNRMHEVIPGAYCTGKVELDGVDLYGKGVDPVAVRRNVGMVFQRANPFPAMSIRDNVVAGLKLNGVRDNKLLDEACEKSLRGANLWDEVKDRLERSGASLSGGQQQRLCIARAIAVEPEVLLMDEPCSALDPISTLAIEDLVSELKERFTVVIVTHNMQQAARVSDQTAFFNLKAQGEPGRLVEIDTTERIFSNPKEKATEDYISGRFG.

In terms of domain architecture, ABC transporter spans 5 to 247; it reads IETKDLDIYY…ERIFSNPKEK (243 aa). ATP is bound at residue 37 to 44; the sequence is GPSGCGKS.

It belongs to the ABC transporter superfamily. Phosphate importer (TC 3.A.1.7) family. The complex is composed of two ATP-binding proteins (PstB), two transmembrane proteins (PstC and PstA) and a solute-binding protein (PstS).

The protein localises to the cell membrane. The catalysed reaction is phosphate(out) + ATP + H2O = ADP + 2 phosphate(in) + H(+). Functionally, part of the ABC transporter complex PstSACB involved in phosphate import. Responsible for energy coupling to the transport system. This is Phosphate import ATP-binding protein PstB from Cutibacterium acnes (strain DSM 16379 / KPA171202) (Propionibacterium acnes).